Consider the following 107-residue polypeptide: UPF0145 protein Sfri_2095 (107 aa).

The protein belongs to the UPF0145 family.

The protein is UPF0145 protein Sfri_2095 of Shewanella frigidimarina (strain NCIMB 400).